A 338-amino-acid polypeptide reads, in one-letter code: L-serine dehydratase (338 aa).

Residue K39 is modified to N6-(pyridoxal phosphate)lysine.

It belongs to the serine/threonine dehydratase family. Pyridoxal 5'-phosphate serves as cofactor.

It is found in the cytoplasm. It catalyses the reaction L-serine = pyruvate + NH4(+). It functions in the pathway carbohydrate biosynthesis; gluconeogenesis. The sequence is that of L-serine dehydratase (SDL1) from Saccharomyces cerevisiae (strain AWRI1631) (Baker's yeast).